An 865-amino-acid polypeptide reads, in one-letter code: Xylosyltransferase 2 (865 aa).

The Cytoplasmic segment spans residues 1-15 (MVASARVQKLVRRYK). Residues 16 to 36 (LAIATALAILLLQGLVVWSFS) form a helical; Signal-anchor for type II membrane protein membrane-spanning segment. The Lumenal segment spans residues 37–865 (GLEEDEAGEK…GPVKADGRLR (829 aa)). Residues 41–157 (DEAGEKGRQR…EGAPQPTDNG (117 aa)) form a disordered region. Residues 53-65 (RPLDPGEGSKDTD) are compositionally biased toward basic and acidic residues. A compositionally biased stretch (basic residues) spans 73-82 (STGRRHGRWR). An N-linked (GlcNAc...) asparagine glycan is attached at Asn122. The span at 125-137 (GAAAGEALVGAAG) shows a compositional bias: low complexity. Intrachain disulfides connect Cys162–Cys190, Cys206–Cys448, Cys467–Cys480, and Cys469–Cys478. UDP-alpha-D-xylose contacts are provided by residues Val239, Asp267, and 296–298 (TIW). Asn327 carries N-linked (GlcNAc...) asparagine glycosylation. Residue 400–401 (DW) coordinates UDP-alpha-D-xylose. Residues Ser481 and 504–505 (RK) contribute to the UDP-alpha-D-xylose site. Cystine bridges form between Cys581–Cys833 and Cys826–Cys839. Asn683 carries N-linked (GlcNAc...) asparagine glycosylation. The interval 846–865 (SLSPDPKSELGPVKADGRLR) is disordered.

The protein belongs to the glycosyltransferase 14 family. XylT subfamily. As to quaternary structure, monomer. It depends on Mg(2+) as a cofactor. The cofactor is Mn(2+). In terms of processing, contains disulfide bonds. Widely expressed. Expressed at higher level in kidney and pancreas.

The protein resides in the golgi apparatus membrane. It is found in the secreted. The enzyme catalyses UDP-alpha-D-xylose + L-seryl-[protein] = 3-O-(beta-D-xylosyl)-L-seryl-[protein] + UDP + H(+). The protein operates within glycan metabolism; chondroitin sulfate biosynthesis. It participates in glycan metabolism; heparan sulfate biosynthesis. Catalyzes the first step in the biosynthesis of chondroitin sulfate, heparan sulfate and dermatan sulfate proteoglycans, such as DCN. Transfers D-xylose from UDP-D-xylose to specific serine residues of the core protein. The chain is Xylosyltransferase 2 (XYLT2) from Homo sapiens (Human).